Here is a 152-residue protein sequence, read N- to C-terminus: Deoxyuridine 5'-triphosphate nucleotidohydrolase (152 aa).

Substrate contacts are provided by residues 71–73 (RSG), N84, 88–90 (LID), and M98.

The protein belongs to the dUTPase family. It depends on Mg(2+) as a cofactor.

The catalysed reaction is dUTP + H2O = dUMP + diphosphate + H(+). It participates in pyrimidine metabolism; dUMP biosynthesis; dUMP from dCTP (dUTP route): step 2/2. Its function is as follows. This enzyme is involved in nucleotide metabolism: it produces dUMP, the immediate precursor of thymidine nucleotides and it decreases the intracellular concentration of dUTP so that uracil cannot be incorporated into DNA. This Shewanella pealeana (strain ATCC 700345 / ANG-SQ1) protein is Deoxyuridine 5'-triphosphate nucleotidohydrolase.